The chain runs to 1189 residues: Disabled homolog 2-interacting protein (1189 aa).

The tract at residues 1–75 (MSAGGNARKS…EPSASTPFRV (75 aa)) is disordered. Residues 20–38 (LLRRPRLQRQRSRSRSRTR) show a composition bias toward basic residues. Residues 39–49 (PARESPQERPG) are compositionally biased toward basic and acidic residues. The span at 59 to 73 (SEKNPSMEPSASTPF) shows a compositional bias: polar residues. The PH domain maps to 101–202 (SFRHILPGFR…WMENLRRAVH (102 aa)). In terms of domain architecture, C2 spans 193–311 (WMENLRRAVH…AGRQFVEKWY (119 aa)). The Ras-GAP domain maps to 387–595 (GKVKDFLTDL…TNMQRFLLEI (209 aa)). Positions 646–943 (LRDVHTALST…RTPPTLLSTL (298 aa)) are necessary for interaction with AKT1. Polar residues predominate over residues 653 to 668 (LSTPGSGQLPGTNDLA). Disordered stretches follow at residues 653 to 679 (LSTP…SSVS) and 715 to 738 (RSSG…PDLQ). Positions 669–679 (STPGSGSSSVS) are enriched in low complexity. Residues 715 to 731 (RSSGVQPSPARSSSYSE) are compositionally biased toward polar residues. Phosphoserine; by MAP3K5 and RIPK1 is present on Ser728. Ser747 carries the phosphoserine modification. Disordered regions lie at residues 804–823 (VPTP…PQLL), 843–865 (PRGL…NSEE), 895–998 (SLTE…SPNA), 1015–1034 (EDEG…SKEE), and 1163–1189 (ARNG…SSNC). The segment covering 852–865 (EGHSSLSSHSNSEE) has biased composition (low complexity). Residues 919-931 (QPPPPPPPPPPAP) are compositionally biased toward pro residues. Polar residues-rich tracts occupy residues 939–955 (LLST…TLAS) and 967–976 (LRQQSSSSKG). Ser978 and Ser995 each carry phosphoserine. Positions 1023–1034 (PPHRDRLRSKEE) are enriched in basic and acidic residues. Positions 1025 to 1159 (HRDRLRSKEE…SALTQLKERY (135 aa)) form a coiled coil.

In terms of assembly, on plasma membrane, exists in an inactive form complexed with TNFR1; in response to TNF-alpha, dissociates from TNFR1 complex, translocates to cytoplasm and forms part of an intracellular signaling complex comprising TRADD, RIPK1, TRAF2 and MAP3K5. Interacts with DAB1. Part of a cytoplasmic complex made of HIPK1, DAB2IP and MAP3K5 in response to TNF-alpha; this complex formation promotes MAP3K5-JNK activation and subsequent apoptosis. Interacts (via N-terminal domain) with JAK2; the interaction occurs in a IFNG/IFN-gamma-dependent manner and inhibits JAK2 autophosphorylation activity. Interacts (via C2 domain) with GSK3B; the interaction stimulates GSK3B kinase activation. Interacts (via C2 domain) with PPP2CA. Interacts (via proline-rich motif) with a regulatory p85 subunit (via SH3 domain) of the PI3K complex; the interaction inhibits the PI3K-AKT complex activity in a TNF-alpha-dependent manner in prostate cancer (PCa) cells. Interacts with AKT1; the interaction is increased in a TNF-alpha-induced manner. Interacts (via C2 domain and active form preferentially) with KDR/VEGFR2 (tyrosine-phosphorylated active form preferentially); the interaction occurs at the late phase of VEGFA response and inhibits KDR/VEGFR2 activity. Interacts (via N-terminus C2 domain) with MAP3K5 ('Ser-966' dephosphorylated form preferentially); the interaction occurs in a TNF-alpha-induced manner. Interacts (via Ras-GAP domain) with the catalytic subunit of protein phosphatase PP2A; the interaction occurs in resting endothelial cells, is further enhanced by TNF-alpha stimulation and is required to bridge PP2A to MAP3K5. Interacts (via C-terminus PER domain) with TRAF2 (via zinc fingers); the interaction occurs in a TNF-alpha-dependent manner. Interacts with 14-3-3 proteins; the interaction occurs in a TNF-alpha-dependent manner. Interacts (via Ras-GAP domain) with RIPK1 (via kinase domain); the interaction occurs in a TNF-alpha-dependent manner. Interacts (via PH domain) with ERN1. Interacts with TRAF2. Interacts (via NPXY motif) with DAB2 (via PID domain). Interacts with RAB40C; acts as a GAP for RAB40C. In terms of processing, in response to TNF-alpha-induction, phosphorylated at Ser-728; phosphorylation leads to a conformational change, and thus, increases its association with 14-3-3 proteins, MAP3K5, RIPK1 and TRAF2 in endothelial cells; also stimulates regulatory p85 subunit sequestring and PI3K-p85 complex activity inhibition. As to expression, expressed in vascular endothelium of muscle and aorta, in smooth muscle cells of aorta and epithelial cells of lung. Expressed throughout the brain, including olfactory bulb, hypothalamus, cerebellum and cerebral cortex. Expressed in the soma and processes of neurons in a variety of brain structures, including the developing cerebral cortex, CA1 pyramidal neurons and Purkinje cells. Poorly expressed in medulloblastoma cells compared to cerebellar precursor proliferating progenitor cells (at protein level). Highly expressed in the brain, salivary gland, and testis; moderate expression in kidney and heart. Low expression in the lung, seminal vesicle, ventral prostate, epididymis, liver, and bladder. Very low expression in the coagulation gland and skeleton muscles. Lowest expression seen in spleen.

The protein resides in the cytoplasm. It localises to the cell membrane. Its subcellular location is the membrane. The protein localises to the cell projection. It is found in the dendrite. Functionally, functions as a scaffold protein implicated in the regulation of a large spectrum of both general and specialized signaling pathways. Involved in several processes such as innate immune response, inflammation and cell growth inhibition, apoptosis, cell survival, angiogenesis, cell migration and maturation. Also plays a role in cell cycle checkpoint control; reduces G1 phase cyclin levels resulting in G0/G1 cell cycle arrest. Mediates signal transduction by receptor-mediated inflammatory signals, such as the tumor necrosis factor (TNF), interferon (IFN) or lipopolysaccharide (LPS). Modulates the balance between phosphatidylinositol 3-kinase (PI3K)-AKT-mediated cell survival and apoptosis stimulated kinase (MAP3K5)-JNK signaling pathways; sequesters both AKT1 and MAP3K5 and counterbalances the activity of each kinase by modulating their phosphorylation status in response to pro-inflammatory stimuli. Acts as a regulator of the endoplasmic reticulum (ER) unfolded protein response (UPR) pathway; specifically involved in transduction of the ER stress-response to the JNK cascade through ERN1. Mediates TNF-alpha-induced apoptosis activation by facilitating dissociation of inhibitor 14-3-3 from MAP3K5; recruits the PP2A phosphatase complex which dephosphorylates MAP3K5 on 'Ser-966', leading to the dissociation of 13-3-3 proteins and activation of the MAP3K5-JNK signaling pathway in endothelial cells. Also mediates TNF/TRAF2-induced MAP3K5-JNK activation, while it inhibits CHUK-NF-kappa-B signaling. Acts a negative regulator in the IFN-gamma-mediated JAK-STAT signaling cascade by inhibiting smooth muscle cell (VSMCs) proliferation and intimal expansion, and thus, prevents graft arteriosclerosis (GA). Acts as a GTPase-activating protein (GAP) for the ADP ribosylation factor 6 (ARF6) and Ras. Promotes hydrolysis of the ARF6-bound GTP and thus, negatively regulates phosphatidylinositol 4,5-bisphosphate (PIP2)-dependent TLR4-TIRAP-MyD88 and NF-kappa-B signaling pathways in endothelial cells in response to lipopolysaccharides (LPS). Binds specifically to phosphatidylinositol 4-phosphate (PtdIns4P) and phosphatidylinositol 3-phosphate (PtdIns3P). In response to vascular endothelial growth factor (VEGFA), acts as a negative regulator of the VEGFR2-PI3K-mediated angiogenic signaling pathway by inhibiting endothelial cell migration and tube formation. In the developing brain, promotes both the transition from the multipolar to the bipolar stage and the radial migration of cortical neurons from the ventricular zone toward the superficial layer of the neocortex in a glial-dependent locomotion process. Probable downstream effector of the Reelin signaling pathway; promotes Purkinje cell (PC) dendrites development and formation of cerebellar synapses. Also functions as a tumor suppressor protein in prostate cancer progression; prevents cell proliferation and epithelial-to-mesenchymal transition (EMT) through activation of the glycogen synthase kinase-3 beta (GSK3B)-induced beta-catenin and inhibition of PI3K-AKT and Ras-MAPK survival downstream signaling cascades, respectively. The chain is Disabled homolog 2-interacting protein (Dab2ip) from Mus musculus (Mouse).